Reading from the N-terminus, the 527-residue chain is NAD(P)H-quinone oxidoreductase chain 4 1 (527 aa).

The next 13 membrane-spanning stretches (helical) occupy residues 6 to 26 (FPWL…VPII), 36 to 56 (WFAL…FYSS), 91 to 111 (LIIL…PVTF), 113 to 133 (PKLF…VFAV), 136 to 156 (LLLF…ILSI), 169 to 189 (FILY…TMAF), 212 to 232 (LFLY…FPLH), 243 to 263 (TAPA…YALL), 275 to 295 (AVFA…AALT), 306 to 326 (IAYS…SFTD), 331 to 351 (GAML…FMVG), 387 to 407 (LALP…GFAT), and 417 to 437 (VIIV…LLSM).

This sequence belongs to the complex I subunit 4 family.

It localises to the cellular thylakoid membrane. It carries out the reaction a plastoquinone + NADH + (n+1) H(+)(in) = a plastoquinol + NAD(+) + n H(+)(out). The catalysed reaction is a plastoquinone + NADPH + (n+1) H(+)(in) = a plastoquinol + NADP(+) + n H(+)(out). In terms of biological role, NDH-1 shuttles electrons from NAD(P)H, via FMN and iron-sulfur (Fe-S) centers, to quinones in the respiratory chain. The immediate electron acceptor for the enzyme in this species is believed to be plastoquinone. Couples the redox reaction to proton translocation (for every two electrons transferred, four hydrogen ions are translocated across the cytoplasmic membrane), and thus conserves the redox energy in a proton gradient. The protein is NAD(P)H-quinone oxidoreductase chain 4 1 of Microcystis aeruginosa (strain NIES-843 / IAM M-2473).